The sequence spans 398 residues: Carbamoyl phosphate synthase large chain (398 aa).

The region spanning 1 to 187 is the ATP-grasp domain; sequence KLGVPQPEGG…LAKIAAKVIV (187 aa). Residues 1 to 255 are carbamoyl phosphate synthetic domain; sequence KLGVPQPEGG…YKAELAADNV (255 aa). ATP is bound by residues arginine 32, aspartate 71, leucine 73, glutamate 78, glycine 103, valine 104, histidine 105, serine 106, glutamine 146, and glutamate 158. Mg(2+) contacts are provided by glutamine 146, glutamate 158, and asparagine 160. Residues glutamine 146, glutamate 158, and asparagine 160 each contribute to the Mn(2+) site. The region spanning 254–395 is the MGS-like domain; it reads NVLPLTGKVF…NEYHKEMEEE (142 aa). Positions 256–398 are allosteric domain; that stretch reads LPLTGKVFLS…HKEMEEENKV (143 aa).

This sequence belongs to the CarB family. As to quaternary structure, composed of two chains; the small (or glutamine) chain promotes the hydrolysis of glutamine to ammonia, which is used by the large (or ammonia) chain to synthesize carbamoyl phosphate. Tetramer of heterodimers (alpha,beta)4. Requires Mg(2+) as cofactor. Mn(2+) is required as a cofactor.

It carries out the reaction hydrogencarbonate + L-glutamine + 2 ATP + H2O = carbamoyl phosphate + L-glutamate + 2 ADP + phosphate + 2 H(+). It catalyses the reaction hydrogencarbonate + NH4(+) + 2 ATP = carbamoyl phosphate + 2 ADP + phosphate + 2 H(+). Its pathway is amino-acid biosynthesis; L-arginine biosynthesis; carbamoyl phosphate from bicarbonate: step 1/1. The protein operates within pyrimidine metabolism; UMP biosynthesis via de novo pathway; (S)-dihydroorotate from bicarbonate: step 1/3. In terms of biological role, large subunit of the glutamine-dependent carbamoyl phosphate synthetase (CPSase). CPSase catalyzes the formation of carbamoyl phosphate from the ammonia moiety of glutamine, carbonate, and phosphate donated by ATP, constituting the first step of 2 biosynthetic pathways, one leading to arginine and/or urea and the other to pyrimidine nucleotides. The large subunit (synthetase) binds the substrates ammonia (free or transferred from glutamine from the small subunit), hydrogencarbonate and ATP and carries out an ATP-coupled ligase reaction, activating hydrogencarbonate by forming carboxy phosphate which reacts with ammonia to form carbamoyl phosphate. The chain is Carbamoyl phosphate synthase large chain from Methanosarcina barkeri.